The following is a 251-amino-acid chain: Cytochrome P450 monooxygenase ppzG (251 aa).

Cysteine 250 is a binding site for heme.

It belongs to the cytochrome P450 family. It depends on heme as a cofactor.

Its pathway is secondary metabolite biosynthesis. In terms of biological role, cytochrome P450 monooxygenase; part of the gene cluster that mediates the biosynthesis of pyrrolopyrazines, secondary metabolites showing insecticidal activity. The role of ppzG within the pathway has still to be determined. The single multifunctional NRPS ppzA is sufficient to produce peramine via condensation of 1-pyrroline-5-carboxylate and arginine, N-methylation of the alpha-amino group of arginine and reduction of the thioester and the cyclization to form an iminium ion resulting in release from the peptide synthetase. Deprotonation of this intermediate and oxidation of the pyrroline ring would give rise to peramine. In Epichloe species that produce only peramine, the peramine synthetase gene is not localized in a gene cluster, in contrast to Metarhizium species that contain additional pyrrolopyrazine biosynthesis genes. The 2-oxoglutarate-Fe(II) type oxidoreductase ppzC hydroxylates peramine to yield the newly identified compound 8-hydroxyperamine whereas ppzD converts L-proline into trans-4-hydroxy-L-proline, a precursor of peramine biosynthesis. The protein is Cytochrome P450 monooxygenase ppzG of Metarhizium rileyi (strain RCEF 4871) (Nomuraea rileyi).